A 600-amino-acid polypeptide reads, in one-letter code: Sulfite reductase [NADPH] flavoprotein alpha-component (600 aa).

Residues 63 to 201 (ITLISASQTG…VADQWRKQLT (139 aa)) enclose the Flavodoxin-like domain. FMN is bound by residues 69–74 (SQTGNA), 116–119 (STQG), and 152–161 (LGDTSYERFC). The 215-residue stretch at 235 to 449 (QAPLTAALAT…IEHNDNFRLP (215 aa)) folds into the FAD-binding FR-type domain. Residues Thr-323, His-357, 387 to 390 (RLYS), 405 to 407 (TVG), Tyr-411, and 420 to 423 (GGAS) contribute to the FAD site. Residues 520–521 (SR), 526–530 (KIYVQ), and Asp-562 contribute to the NADP(+) site. Tyr-600 lines the FAD pocket.

It belongs to the NADPH-dependent sulphite reductase flavoprotein subunit CysJ family. This sequence in the N-terminal section; belongs to the flavodoxin family. In the C-terminal section; belongs to the flavoprotein pyridine nucleotide cytochrome reductase family. As to quaternary structure, alpha(8)-beta(8). The alpha component is a flavoprotein, the beta component is a hemoprotein. FAD is required as a cofactor. FMN serves as cofactor.

The enzyme catalyses hydrogen sulfide + 3 NADP(+) + 3 H2O = sulfite + 3 NADPH + 4 H(+). Its pathway is sulfur metabolism; hydrogen sulfide biosynthesis; hydrogen sulfide from sulfite (NADPH route): step 1/1. Component of the sulfite reductase complex that catalyzes the 6-electron reduction of sulfite to sulfide. This is one of several activities required for the biosynthesis of L-cysteine from sulfate. The flavoprotein component catalyzes the electron flow from NADPH -&gt; FAD -&gt; FMN to the hemoprotein component. This is Sulfite reductase [NADPH] flavoprotein alpha-component from Photorhabdus laumondii subsp. laumondii (strain DSM 15139 / CIP 105565 / TT01) (Photorhabdus luminescens subsp. laumondii).